A 197-amino-acid polypeptide reads, in one-letter code: Peptidyl-tRNA hydrolase (197 aa).

Tyr18 contributes to the tRNA binding site. His23 serves as the catalytic Proton acceptor. TRNA is bound by residues Tyr68, Asn70, and Asn116.

Belongs to the PTH family. As to quaternary structure, monomer.

It localises to the cytoplasm. It catalyses the reaction an N-acyl-L-alpha-aminoacyl-tRNA + H2O = an N-acyl-L-amino acid + a tRNA + H(+). Its function is as follows. Hydrolyzes ribosome-free peptidyl-tRNAs (with 1 or more amino acids incorporated), which drop off the ribosome during protein synthesis, or as a result of ribosome stalling. Functionally, catalyzes the release of premature peptidyl moieties from peptidyl-tRNA molecules trapped in stalled 50S ribosomal subunits, and thus maintains levels of free tRNAs and 50S ribosomes. In Desulfotalea psychrophila (strain LSv54 / DSM 12343), this protein is Peptidyl-tRNA hydrolase.